The sequence spans 501 residues: Glutamyl-tRNA(Gln) amidotransferase subunit A (501 aa).

Catalysis depends on charge relay system residues lysine 84 and serine 159. Serine 183 serves as the catalytic Acyl-ester intermediate.

This sequence belongs to the amidase family. GatA subfamily. Heterotrimer of A, B and C subunits.

It carries out the reaction L-glutamyl-tRNA(Gln) + L-glutamine + ATP + H2O = L-glutaminyl-tRNA(Gln) + L-glutamate + ADP + phosphate + H(+). Functionally, allows the formation of correctly charged Gln-tRNA(Gln) through the transamidation of misacylated Glu-tRNA(Gln) in organisms which lack glutaminyl-tRNA synthetase. The reaction takes place in the presence of glutamine and ATP through an activated gamma-phospho-Glu-tRNA(Gln). The sequence is that of Glutamyl-tRNA(Gln) amidotransferase subunit A from Streptomyces avermitilis (strain ATCC 31267 / DSM 46492 / JCM 5070 / NBRC 14893 / NCIMB 12804 / NRRL 8165 / MA-4680).